Here is a 75-residue protein sequence, read N- to C-terminus: Putative primary metabolism protein HVA1 (75 aa).

A compositionally biased stretch (polar residues) spans 1–13; it reads MSVQDKQGQNINV. Disordered stretches follow at residues 1–24 and 40–75; these read MSVQ…YRGG and AAEK…DKQK.

In terms of biological role, may play a role in primary metabolism. In Cryptococcus neoformans var. grubii serotype A (strain H99 / ATCC 208821 / CBS 10515 / FGSC 9487) (Filobasidiella neoformans var. grubii), this protein is Putative primary metabolism protein HVA1.